The sequence spans 932 residues: Protocadherin gamma-A2 (932 aa).

The N-terminal stretch at 1 to 28 is a signal peptide; that stretch reads MAALQKLPHCRKLFLLCFLLATLWEARA. Cadherin domains are found at residues 29–133, 134–242, 243–347, 348–452, 453–562, and 570–682; these read GQIR…APRF, GVEE…APVF, TQPE…APEF, YMTS…APAF, SRTS…PPEI, and DGST…EPSA. Residues 29–692 lie on the Extracellular side of the membrane; it reads GQIRYSVREE…KPNDSDLTLY (664 aa). N-linked (GlcNAc...) asparagine glycosylation is found at Asn419 and Asn545. Asn685 carries N-linked (GlcNAc...) asparagine glycosylation. A helical membrane pass occupies residues 693 to 713; that stretch reads LVVAVAAVSCVFLAFVIVLLA. Residues 714 to 932 lie on the Cytoplasmic side of the membrane; sequence HRLRRWHKSR…KKKSGKKEKK (219 aa). Disordered stretches follow at residues 798 to 841 and 902 to 932; these read LEEE…WPNN and ATLTNAAGKRDGKAPAGGNGNKKKSGKKEKK. A compositionally biased stretch (polar residues) spans 806–841; that stretch reads FSQQAPPNTDWRFSQAQRPGTSGSQNGDDTGTWPNN. The span at 922–932 shows a compositional bias: basic residues; sequence NKKKSGKKEKK.

The protein resides in the cell membrane. In terms of biological role, potential calcium-dependent cell-adhesion protein. May be involved in the establishment and maintenance of specific neuronal connections in the brain. The protein is Protocadherin gamma-A2 (PCDHGA2) of Pan troglodytes (Chimpanzee).